Here is a 353-residue protein sequence, read N- to C-terminus: Protein-glutamate methylesterase/protein-glutamine glutaminase 4 (353 aa).

Residues 7-124 enclose the Response regulatory domain; that stretch reads RILVAEDSPT…SPDFDADSRR (118 aa). Asp-58 carries the 4-aspartylphosphate modification. The 193-residue stretch at 158–350 folds into the CheB-type methylesterase domain; it reads PVSPTRPGVV…SRLTSAFRGS (193 aa). Catalysis depends on residues Ser-172, His-199, and Asp-292.

It belongs to the CheB family. Phosphorylated by CheA. Phosphorylation of the N-terminal regulatory domain activates the methylesterase activity.

The protein localises to the cytoplasm. The enzyme catalyses [protein]-L-glutamate 5-O-methyl ester + H2O = L-glutamyl-[protein] + methanol + H(+). The catalysed reaction is L-glutaminyl-[protein] + H2O = L-glutamyl-[protein] + NH4(+). In terms of biological role, involved in chemotaxis. Part of a chemotaxis signal transduction system that modulates chemotaxis in response to various stimuli. Catalyzes the demethylation of specific methylglutamate residues introduced into the chemoreceptors (methyl-accepting chemotaxis proteins or MCP) by CheR. Also mediates the irreversible deamidation of specific glutamine residues to glutamic acid. In Myxococcus xanthus (strain DK1622), this protein is Protein-glutamate methylesterase/protein-glutamine glutaminase 4.